The chain runs to 111 residues: Nucleoid-associated protein CYB_2894 (111 aa).

It belongs to the YbaB/EbfC family. In terms of assembly, homodimer.

It localises to the cytoplasm. The protein resides in the nucleoid. In terms of biological role, binds to DNA and alters its conformation. May be involved in regulation of gene expression, nucleoid organization and DNA protection. The polypeptide is Nucleoid-associated protein CYB_2894 (Synechococcus sp. (strain JA-2-3B'a(2-13)) (Cyanobacteria bacterium Yellowstone B-Prime)).